A 161-amino-acid polypeptide reads, in one-letter code: Lipoprotein signal peptidase (161 aa).

A run of 4 helical transmembrane segments spans residues 8–28 (LKYF…KYLA), 40–60 (ITSF…SLLS), 67–87 (QMIM…YLII), and 91–111 (ITEK…LGNF). Residues aspartate 122 and aspartate 140 contribute to the active site. A helical transmembrane segment spans residues 136-156 (FNIADSAITCGVVILIAASLF).

It belongs to the peptidase A8 family.

It is found in the cell inner membrane. The catalysed reaction is Release of signal peptides from bacterial membrane prolipoproteins. Hydrolyzes -Xaa-Yaa-Zaa-|-(S,diacylglyceryl)Cys-, in which Xaa is hydrophobic (preferably Leu), and Yaa (Ala or Ser) and Zaa (Gly or Ala) have small, neutral side chains.. The protein operates within protein modification; lipoprotein biosynthesis (signal peptide cleavage). Functionally, this protein specifically catalyzes the removal of signal peptides from prolipoproteins. The protein is Lipoprotein signal peptidase of Francisella tularensis subsp. novicida (strain U112).